A 332-amino-acid polypeptide reads, in one-letter code: RING finger protein 225 (332 aa).

The segment at 1–55 (MPCPRLPWLRRHRTSQGSGPSSPSTVSAPNSPSRGEDEDAEEEEGDGTPGSGPIL) is disordered. Low complexity predominate over residues 15-27 (SQGSGPSSPSTVS). The span at 36–46 (EDEDAEEEEGD) shows a compositional bias: acidic residues. Residues 63–111 (CLICVSPFDGIFKLPKRLDCGHVFCLECLARLSLATAGGGDAVACPMCR) form an RING-type zinc finger. The tract at residues 121 to 187 (GLPALPTQPG…PPPLRLGRPL (67 aa)) is disordered. The chain crosses the membrane as a helical span at residues 205–225 (ALAVLVAAGLVVSGVYIFFLI). Residues 259–332 (THAWTRRPTK…ADGKKVQLQQ (74 aa)) form a disordered region. 2 stretches are compositionally biased toward basic and acidic residues: residues 280 to 295 (ATKD…KDPV) and 323 to 332 (ADGKKVQLQQ).

The protein resides in the membrane. The sequence is that of RING finger protein 225 from Mus musculus (Mouse).